The chain runs to 424 residues: MTTMISNLPRVLIEEIFFRVPLKSLRAVRLTCKSWNTLSKSRSFRKLYISKRATREEESMMIAMMNFDLYSMRVVVDDDVDPSKAFKKKRNKKSIAFKRQPIFLDEQVKISQVFHCEGLLLCFLKEDDTRVVVWNPYCGQTRWIQLRYSHRPHKDRFIYALGYKDKESRGSFQLLRFVDYFLGAPKNQYFWYEIYDFNSDSWTTLDVTPHWCIYCCDRGVSLNGNTYWCAKERKAEDDIVDHIISFDFTNERFGPLLPLPSKVMEHEYEIVTLSYVKEEKLAALFQHYEADWNEFDIWITTKIDAEVVSWSMFLRMDTGPRIEVPHICEGFFIDEEKKVAMGFEEDFDRKTFIIIGEAGYVRKLDIKAHVDRKCRPTVCSYVPSLVQIKKPARGKRKRQSSLEKRLFDQNMLRLEAFKKLGGYF.

The 46-residue stretch at 2–47 (TTMISNLPRVLIEEIFFRVPLKSLRAVRLTCKSWNTLSKSRSFRKL) folds into the F-box domain.

This chain is F-box protein At2g38590, found in Arabidopsis thaliana (Mouse-ear cress).